The sequence spans 290 residues: Protein SET (290 aa).

The tract at residues 1–45 is disordered; that stretch reads MAPKRQSPLPPQKKKPRPPPALGPEETSASAGLPKKGEKEQQEAI. Alanine 2 carries the post-translational modification N,N,N-trimethylalanine. At serine 7 the chain carries Phosphoserine. N6-acetyllysine is present on proline 11. 3 positions are modified to phosphoserine: lysine 15, proline 24, and serine 28. Residues 31 to 78 are dimerization; it reads AGLPKKGEKEQQEAIEHIDEVQNEIDRLNEQASEEILKVEQKYNKLRQ. Over residues 35–45 the composition is skewed to basic and acidic residues; it reads KKGEKEQQEAI. Phosphoserine is present on serine 63. An N6-acetyllysine modification is found at lysine 68. The earmuff domain stretch occupies residues 79 to 225; sequence PFFQKRSELI…ELGEVIKDDI (147 aa). Phosphotyrosine is present on tyrosine 146. Lysine 150 carries the N6-acetyllysine modification. Lysine 154 participates in a covalent cross-link: Glycyl lysine isopeptide (Lys-Gly) (interchain with G-Cter in ubiquitin). Disordered regions lie at residues 158–207 and 236–290; these read LNES…TWFT and PDMD…GEDD. Residues 169–181 show a composition bias toward basic and acidic residues; it reads TEIKWKSGKDLTK. Lysine 172 is subject to N6-acetyllysine. Residues 237–290 show a composition bias toward acidic residues; sequence DMDDEEGEGEEDDDDDEEEEGLEDIDEEGDEDEGEEDEDDDEGEEGEEDEGEDD.

The protein belongs to the nucleosome assembly protein (NAP) family. In terms of assembly, headphone-shaped homodimer. Isoforms 1 and 2 interact directly with each other and with ANP32A within the tripartite INHAT (inhibitor of acetyltransferases) complex. Isoform 1 and isoform 2 interact also with histones. Isoform 2 is a component of the SET complex, composed of at least ANP32A, APEX1, HMGB2, NME1, SET and TREX1, but not NME2 or TREX2. Within this complex, directly interacts with ANP32A, NME1, HMGB2 and TREX1; the interaction with ANP32A is enhanced after cleavage. Interacts with APBB1, CHTOP, SETBP1, SGO1. As to quaternary structure, (Microbial infection) Interacts with herpes simplex virus 1 VP22. In terms of processing, isoform 2 is phosphorylated on Ser-15 and Ser-24. Isoform 2 is acetylated on Lys-11. Post-translationally, some glutamate residues are glycylated by TTLL8. This modification occurs exclusively on glutamate residues and results in a glycine chain on the gamma-carboxyl group. In terms of processing, N-terminus of isoform 1 is methylated by METTL11A/NTM1. Mainly trimethylated. Cleaved after Lys-176 by GZMA. The cleavage inhibits its nucleosome assembly activity and disrupts the inhibition on NME1. Widely expressed. Low levels in quiescent cells during serum starvation, contact inhibition or differentiation. Highly expressed in Wilms' tumor.

It localises to the cytoplasm. The protein resides in the cytosol. Its subcellular location is the endoplasmic reticulum. The protein localises to the nucleus. It is found in the nucleoplasm. Functionally, multitasking protein, involved in apoptosis, transcription, nucleosome assembly and histone chaperoning. Isoform 2 anti-apoptotic activity is mediated by inhibition of the GZMA-activated DNase, NME1. In the course of cytotoxic T-lymphocyte (CTL)-induced apoptosis, GZMA cleaves SET, disrupting its binding to NME1 and releasing NME1 inhibition. Isoform 1 and isoform 2 are potent inhibitors of protein phosphatase 2A. Isoform 1 and isoform 2 inhibit EP300/CREBBP and PCAF-mediated acetylation of histones (HAT) and nucleosomes, most probably by masking the accessibility of lysines of histones to the acetylases. The predominant target for inhibition is histone H4. HAT inhibition leads to silencing of HAT-dependent transcription and prevents active demethylation of DNA. Both isoforms stimulate DNA replication of the adenovirus genome complexed with viral core proteins; however, isoform 2 specific activity is higher. In Homo sapiens (Human), this protein is Protein SET (SET).